Here is a 253-residue protein sequence, read N- to C-terminus: tRNA pseudouridine synthase A (253 aa).

The Nucleophile role is filled by aspartate 53. Tyrosine 111 is a substrate binding site.

The protein belongs to the tRNA pseudouridine synthase TruA family. In terms of assembly, homodimer.

The catalysed reaction is uridine(38/39/40) in tRNA = pseudouridine(38/39/40) in tRNA. Formation of pseudouridine at positions 38, 39 and 40 in the anticodon stem and loop of transfer RNAs. In Oceanobacillus iheyensis (strain DSM 14371 / CIP 107618 / JCM 11309 / KCTC 3954 / HTE831), this protein is tRNA pseudouridine synthase A.